The primary structure comprises 364 residues: Tyrosyl-DNA phosphodiesterase 2 (364 aa).

Met1 is modified (N-acetylmethionine). A compositionally biased stretch (low complexity) spans Met1–Gly10. Residues Met1 to Glu21 are disordered. A Glycyl lysine isopeptide (Lys-Gly) (interchain with G-Cter in SUMO2) cross-link involves residue Lys23. The disordered stretch occupies residues Glu68–Val108. Phosphothreonine; by ACVR1B occurs at positions 88 and 92. Ser95 carries the post-translational modification Phosphoserine. The interval Asn122–Leu126 is interaction with 5' end of substrate DNA. Mg(2+) is bound by residues Asp124 and Glu154. Residues His228–Arg233 are interaction with 5' end of substrate DNA. Catalysis depends on Asp264, which acts as the Proton donor/acceptor. The interaction with 5' end of substrate DNA stretch occupies residues Asn266–Arg268.

Belongs to the CCR4/nocturin family. As to quaternary structure, interacts with TRAF2, TRAF3, TRAF5, TRAF6, TNFRSF8/CD30, TNFRSF5/CD40, TNFRSF1B/TNF-R75, ETS1, ETS2, FLI1, SMAD3 and ACVR1B/ALK4. Mg(2+) is required as a cofactor. The cofactor is Mn(2+). Ubiquitinated by TRAF6.

It localises to the nucleus. Its subcellular location is the PML body. It is found in the nucleolus. The protein resides in the cytoplasm. DNA repair enzyme that can remove a variety of covalent adducts from DNA through hydrolysis of a 5'-phosphodiester bond, giving rise to DNA with a free 5' phosphate. Catalyzes the hydrolysis of dead-end complexes between DNA and the topoisomerase 2 (TOP2) active site tyrosine residue. The 5'-tyrosyl DNA phosphodiesterase activity can enable the repair of TOP2-induced DNA double-strand breaks/DSBs without the need for nuclease activity, creating a 'clean' DSB with 5'-phosphate termini that are ready for ligation. Thereby, protects the transcription of many genes involved in neurological development and maintenance from the abortive activity of TOP2. Hydrolyzes 5'-phosphoglycolates on protruding 5' ends on DSBs due to DNA damage by radiation and free radicals. Has preference for single-stranded DNA or duplex DNA with a 4 base pair overhang as substrate. Also has 3'-tyrosyl DNA phosphodiesterase activity, but less efficiently and much slower than TDP1. Constitutes the major if not only 5'-tyrosyl-DNA phosphodiesterase in cells. Also acts as an adapter by participating in the specific activation of MAP3K7/TAK1 in response to TGF-beta: associates with components of the TGF-beta receptor-TRAF6-TAK1 signaling module and promotes their ubiquitination dependent complex formation. Involved in non-canonical TGF-beta induced signaling routes. May also act as a negative regulator of ETS1 and may inhibit NF-kappa-B activation. Acts as a regulator of ribosome biogenesis following stress. The chain is Tyrosyl-DNA phosphodiesterase 2 (TDP2) from Bos taurus (Bovine).